Here is a 116-residue protein sequence, read N- to C-terminus: S-adenosylmethionine decarboxylase proenzyme (116 aa).

Ser63 serves as the catalytic Schiff-base intermediate with substrate; via pyruvic acid. At Ser63 the chain carries Pyruvic acid (Ser); by autocatalysis. Residue His68 is the Proton acceptor; for processing activity of the active site. The active-site Proton donor; for catalytic activity is Cys83.

It belongs to the prokaryotic AdoMetDC family. Type 1 subfamily. In terms of assembly, heterotetramer of two alpha and two beta chains arranged as a dimer of alpha/beta heterodimers. It depends on pyruvate as a cofactor. Post-translationally, is synthesized initially as an inactive proenzyme. Formation of the active enzyme involves a self-maturation process in which the active site pyruvoyl group is generated from an internal serine residue via an autocatalytic post-translational modification. Two non-identical subunits are generated from the proenzyme in this reaction, and the pyruvate is formed at the N-terminus of the alpha chain, which is derived from the carboxyl end of the proenzyme. The post-translation cleavage follows an unusual pathway, termed non-hydrolytic serinolysis, in which the side chain hydroxyl group of the serine supplies its oxygen atom to form the C-terminus of the beta chain, while the remainder of the serine residue undergoes an oxidative deamination to produce ammonia and the pyruvoyl group blocking the N-terminus of the alpha chain.

The catalysed reaction is S-adenosyl-L-methionine + H(+) = S-adenosyl 3-(methylsulfanyl)propylamine + CO2. It functions in the pathway amine and polyamine biosynthesis; S-adenosylmethioninamine biosynthesis; S-adenosylmethioninamine from S-adenosyl-L-methionine: step 1/1. In terms of biological role, catalyzes the decarboxylation of S-adenosylmethionine to S-adenosylmethioninamine (dcAdoMet), the propylamine donor required for the synthesis of the polyamines spermine and spermidine from the diamine putrescine. This Clostridium botulinum (strain Okra / Type B1) protein is S-adenosylmethionine decarboxylase proenzyme.